The sequence spans 176 residues: Ribosome maturation factor RimM (176 aa).

In terms of domain architecture, PRC barrel spans 104–176; sequence EDEYYFYEIL…KIIAKEMEWI (73 aa).

Belongs to the RimM family. As to quaternary structure, binds ribosomal protein uS19.

The protein resides in the cytoplasm. Its function is as follows. An accessory protein needed during the final step in the assembly of 30S ribosomal subunit, possibly for assembly of the head region. Essential for efficient processing of 16S rRNA. May be needed both before and after RbfA during the maturation of 16S rRNA. It has affinity for free ribosomal 30S subunits but not for 70S ribosomes. This Thermotoga maritima (strain ATCC 43589 / DSM 3109 / JCM 10099 / NBRC 100826 / MSB8) protein is Ribosome maturation factor RimM.